Reading from the N-terminus, the 1059-residue chain is WD repeat-containing protein on Y chromosome (1059 aa).

WD repeat units follow at residues 121 to 161, 170 to 209, 214 to 256, 344 to 383, 387 to 426, 476 to 515, 528 to 567, 616 to 658, 714 to 759, 766 to 805, and 849 to 888; these read DFCP…ALTA, RSKTWVLDTVPLPDLSMFCVTGLETELRLYNVVAACFTLK, RLPQ…KVTT, CVPRGVTCFAFEPSNELLVSGGPDCDLRLWDIHRPEKPSV, GHTSSITFLFLQDAGEKIYSLDQRKIIKVWDVRNRVLLQT, SHTKPVSVLLYNGLYRLVVSCGFDSFIIVWDHRVNRKMTI, LEPVEITAACFDGKEQMLLTGARNGSLKIWNIGGRTCMRT, QHSD…RRYD, MRQL…GFKG, MAGDRIITLATDKANRFLFTGTALGYVKTWYIENCWIPNE, and AHRACVTGLTYLDDTGLLLSCSSDRTVRLWTLGGRYIGLL.

The protein is WD repeat-containing protein on Y chromosome of Anopheles gambiae (African malaria mosquito).